The chain runs to 228 residues: L-ribulose-5-phosphate 4-epimerase UlaF (228 aa).

Substrate is bound by residues 26–27 (GN), 43–44 (SG), and 72–73 (SS). Zn(2+)-binding residues include aspartate 74, histidine 93, and histidine 95. Aspartate 118 acts as the Proton donor/acceptor in catalysis. Zn(2+) is bound at residue histidine 167. Tyrosine 225 (proton donor/acceptor) is an active-site residue.

Belongs to the aldolase class II family. AraD/FucA subfamily. Requires Zn(2+) as cofactor.

The enzyme catalyses L-ribulose 5-phosphate = D-xylulose 5-phosphate. Its pathway is cofactor degradation; L-ascorbate degradation; D-xylulose 5-phosphate from L-ascorbate: step 4/4. Functionally, catalyzes the isomerization of L-ribulose 5-phosphate to D-xylulose 5-phosphate. Is involved in the anaerobic L-ascorbate utilization. The protein is L-ribulose-5-phosphate 4-epimerase UlaF of Escherichia coli O17:K52:H18 (strain UMN026 / ExPEC).